The chain runs to 331 residues: GTP-binding protein RHO5 (331 aa).

Position 10–17 (10–17 (GDGAVGKT)) interacts with GTP. The tract at residues 51-76 (ASSPLELDNGNDKRGSLSSASSSPST) is disordered. Over residues 66-75 (SLSSASSSPS) the composition is skewed to low complexity. Residues 87 to 91 (DTAGQ) and 156 to 159 (TKSD) each bind GTP. 2 positions are modified to phosphoserine: Ser223 and Ser228. Residues Thr232 and Thr244 each carry the phosphothreonine modification. The segment at 239–331 (TATTNTNGDK…KKKKSKCVIL (93 aa)) is disordered. The segment covering 258–273 (HHNNSTDSTLPKGSLQ) has biased composition (polar residues). A Glycyl lysine isopeptide (Lys-Gly) (interchain with G-Cter in ubiquitin) cross-link involves residue Lys276. Residues 287-297 (GQKDKIHEQSK) show a composition bias toward basic and acidic residues. A compositionally biased stretch (basic residues) spans 308–331 (HHNKQAKPKTRNDKKKKKSKCVIL). The residue at position 328 (Cys328) is a Cysteine methyl ester. Residue Cys328 is the site of S-geranylgeranyl cysteine attachment. Positions 329–331 (VIL) are cleaved as a propeptide — removed in mature form.

Belongs to the small GTPase superfamily. Rho family. In terms of assembly, interacts with RGD2.

It localises to the membrane. It is found in the mitochondrion. Small GTPase that negatively regulates a MAP kinase branch, downstream of SLT2, of the PKC1-mediated signal transduction pathway. With its specific guanine nucleotide exchange factor (GEF), the heterodimeric complex DCK1/LMO1, relocates to mitochondria upon oxidative stress and triggers cell death. The DCK1/LMO1/RHO5 signaling module that mediates mitochondrial turnover under nitrogen starvation conditions via mitophagy. The DCK1/LMO1/RHO5 signaling module also plays a role in cell wall integrity signaling. The protein is GTP-binding protein RHO5 of Saccharomyces cerevisiae (strain ATCC 204508 / S288c) (Baker's yeast).